The sequence spans 244 residues: ATP synthase subunit 4, mitochondrial (244 aa).

The transit peptide at 1 to 36 (MASRLAKSAICAARVRPVLSSRTIPAAATTLTSTRS) directs the protein to the mitochondrion.

Belongs to the eukaryotic ATPase B chain family. In terms of assembly, F-type ATPases have 2 components, CF(1) - the catalytic core - and CF(0) - the membrane proton channel. In yeast, the dimeric form of ATP synthase consists of 17 polypeptides: alpha, beta, gamma, delta, epsilon, 4 (B), 5 (OSCP), 6 (A), 8, 9 (C), d, E (Tim11), f, g, h, i/j and k.

The protein localises to the mitochondrion. It localises to the mitochondrion inner membrane. In terms of biological role, mitochondrial membrane ATP synthase (F(1)F(0) ATP synthase or Complex V) produces ATP from ADP in the presence of a proton gradient across the membrane which is generated by electron transport complexes of the respiratory chain. F-type ATPases consist of two structural domains, F(1) - containing the extramembraneous catalytic core, and F(0) - containing the membrane proton channel, linked together by a central stalk and a peripheral stalk. During catalysis, ATP synthesis in the catalytic domain of F(1) is coupled via a rotary mechanism of the central stalk subunits to proton translocation. Part of the complex F(0) domain and the peripheric stalk, which acts as a stator to hold the catalytic alpha(3)beta(3) subcomplex and subunit a/ATP6 static relative to the rotary elements. The polypeptide is ATP synthase subunit 4, mitochondrial (ATP4) (Paracoccidioides brasiliensis).